The following is a 33-amino-acid chain: Dermonecrotic toxin LbSicTox-alphaIB1b (33 aa).

Residue His-11 is part of the active site. Residues Glu-31 and Asp-33 each contribute to the Mg(2+) site.

This sequence belongs to the arthropod phospholipase D family. Class II subfamily. Mg(2+) serves as cofactor. Post-translationally, contains 2 disulfide bonds. Expressed by the venom gland.

It localises to the secreted. It carries out the reaction an N-(acyl)-sphingosylphosphocholine = an N-(acyl)-sphingosyl-1,3-cyclic phosphate + choline. The catalysed reaction is an N-(acyl)-sphingosylphosphoethanolamine = an N-(acyl)-sphingosyl-1,3-cyclic phosphate + ethanolamine. The enzyme catalyses a 1-acyl-sn-glycero-3-phosphocholine = a 1-acyl-sn-glycero-2,3-cyclic phosphate + choline. It catalyses the reaction a 1-acyl-sn-glycero-3-phosphoethanolamine = a 1-acyl-sn-glycero-2,3-cyclic phosphate + ethanolamine. In terms of biological role, dermonecrotic toxins cleave the phosphodiester linkage between the phosphate and headgroup of certain phospholipids (sphingolipid and lysolipid substrates), forming an alcohol (often choline) and a cyclic phosphate. This toxin acts on sphingomyelin (SM) with high activity (9.5 U/mg). It may also act on ceramide phosphoethanolamine (CPE), lysophosphatidylcholine (LPC) and lysophosphatidylethanolamine (LPE), but not on lysophosphatidylserine (LPS), and lysophosphatidylglycerol (LPG). It acts by transphosphatidylation, releasing exclusively cyclic phosphate products as second products. Induces dermonecrosis, hemolysis, increased vascular permeability, edema, inflammatory response, and platelet aggregation. This chain is Dermonecrotic toxin LbSicTox-alphaIB1b, found in Loxosceles boneti (North American fiddleback spider).